Consider the following 301-residue polypeptide: B3 domain-containing protein At5g18090 (301 aa).

The TF-B3 1 DNA-binding region spans 18 to 113 (FFKILRSADL…CFTVDIYQID (96 aa)). Disordered regions lie at residues 123–142 (SATI…NNIY) and 153–194 (SWSE…KMKV). A compositionally biased stretch (basic and acidic residues) spans 133-142 (NKREQRNNIY). Residues 209–301 (VPEFTLTIKK…PTEMLVRVSK (93 aa)) constitute a DNA-binding region (TF-B3 2).

It localises to the nucleus. The polypeptide is B3 domain-containing protein At5g18090 (Arabidopsis thaliana (Mouse-ear cress)).